We begin with the raw amino-acid sequence, 1055 residues long: MDS1 and EVI1 complex locus protein EVI1-A (1055 aa).

3 consecutive C2H2-type zinc fingers follow at residues 21 to 48 (YRCE…VTPH), 75 to 97 (HECK…LLSH), and 103 to 125 (YKCD…QMSH). The C2H2-type 4; degenerate zinc-finger motif lies at 131-155 (YECENCSKQVFTDPSNLQRHIRSQH). C2H2-type zinc fingers lie at residues 161 to 183 (HACS…KHIH) and 189 to 211 (FVCE…KRMH). A C2H2-type 7; atypical zinc finger spans residues 218–240 (IKCKDCGQMFSTTSSLNKHRRFC). 3 disordered regions span residues 324-345 (PVKG…VNQP), 372-423 (FITE…SDKD), and 531-621 (VPLK…PELP). Residues 332 to 345 (EQSSKSQSPHVNQP) are compositionally biased toward polar residues. Residues 381–392 (RPHEKISDHSES) are compositionally biased toward basic and acidic residues. Polar residues predominate over residues 399–413 (STPSGSDLETTSGSD). The short motif at 422–435 (KDKLKENGKLYKDK) is the Nuclear localization signal element. Basic and acidic residues predominate over residues 531–566 (VPLKIEPESPKETKKVQKGKTESPFDLTTKRKEEKA). The short motif at 554-558 (PFDLT) is the CTBP-binding motif 1 element. Over residues 569–583 (NVPSKSGAPTSSNHD) the composition is skewed to polar residues. Positions 585–589 (PLDLS) match the CTBP-binding motif 2 motif. Over residues 591–601 (GSRSRAATTKQ) the composition is skewed to polar residues. The segment covering 602–621 (TEPRKNHIFNEKKDMDPELP) has biased composition (basic and acidic residues). C2H2-type zinc fingers lie at residues 734 to 756 (YTCR…LRTH), 762 to 785 (YRCK…RNIH), and 791 to 813 (FKCH…LKKH). Disordered regions lie at residues 813–837 (HENG…GPIL) and 922–957 (SVDE…EDFK). Over residues 816–827 (GNLSGTAASSPH) the composition is skewed to polar residues. Residues 944 to 954 (DDEDDDDDEEE) are compositionally biased toward acidic residues.

In terms of assembly, homooligomer. Interacts with ctbp. As to expression, expressed dynamically during embryonic development; in the developing pronephros, specific areas of the brain (forebrain, midbrain and hindbrain), and in the majority of the visceral arch, and head mesenchyme derived from neural crest cells. Within the pronephros, expressed in the ventroposterior region of the pronephros anlagen from stage 20 (and is absent from the splanchnic layer that forms the glomus), then expression becomes restricted to the distal tubule and duct by the tadpole stage. In adults, expressed in various tissues including kidney, lung, testis, spleen and stomach.

The protein localises to the nucleus. It localises to the nucleus speckle. Transcriptional repressor during pronephros development. Plays a role in regionalization of the pronephros; may promote formation of the distal tubule and duct over formation of the glomus and proximal tubule. The polypeptide is MDS1 and EVI1 complex locus protein EVI1-A (mecom-a) (Xenopus laevis (African clawed frog)).